A 498-amino-acid polypeptide reads, in one-letter code: ATP synthase subunit beta, chloroplastic (498 aa).

172 to 179 (GGAGVGKT) contributes to the ATP binding site.

Belongs to the ATPase alpha/beta chains family. F-type ATPases have 2 components, CF(1) - the catalytic core - and CF(0) - the membrane proton channel. CF(1) has five subunits: alpha(3), beta(3), gamma(1), delta(1), epsilon(1). CF(0) has four main subunits: a(1), b(1), b'(1) and c(9-12).

The protein localises to the plastid. The protein resides in the chloroplast thylakoid membrane. The catalysed reaction is ATP + H2O + 4 H(+)(in) = ADP + phosphate + 5 H(+)(out). In terms of biological role, produces ATP from ADP in the presence of a proton gradient across the membrane. The catalytic sites are hosted primarily by the beta subunits. This chain is ATP synthase subunit beta, chloroplastic, found in Nicotiana rustica (Aztec tobacco).